A 210-amino-acid polypeptide reads, in one-letter code: Uridine kinase (210 aa).

Position 13–20 (13–20 (GGSGSGKT)) interacts with ATP.

The protein belongs to the uridine kinase family.

The protein resides in the cytoplasm. The catalysed reaction is uridine + ATP = UMP + ADP + H(+). It catalyses the reaction cytidine + ATP = CMP + ADP + H(+). It participates in pyrimidine metabolism; CTP biosynthesis via salvage pathway; CTP from cytidine: step 1/3. The protein operates within pyrimidine metabolism; UMP biosynthesis via salvage pathway; UMP from uridine: step 1/1. The chain is Uridine kinase from Oceanobacillus iheyensis (strain DSM 14371 / CIP 107618 / JCM 11309 / KCTC 3954 / HTE831).